A 1133-amino-acid chain; its full sequence is Guanine nucleotide-binding protein G(s) subunit alpha isoforms XLas (1133 aa).

Disordered stretches follow at residues methionine 1 to leucine 195, aspartate 322 to alanine 552, serine 611 to lysine 648, and arginine 724 to methionine 744. A compositionally biased stretch (low complexity) spans leucine 31–glutamate 48. The span at aspartate 347–alanine 362 shows a compositional bias: basic and acidic residues. 5 stretches are compositionally biased toward low complexity: residues proline 391–alanine 404, glycine 459–glutamate 471, alanine 482–serine 498, alanine 515–alanine 525, and arginine 535–alanine 552. Positions proline 633–threonine 643 are enriched in pro residues. Over residues lysine 732 to methionine 744 the composition is skewed to basic and acidic residues. Residues methionine 737–arginine 761 are a coiled coil. In terms of domain architecture, G-alpha spans cysteine 778–leucine 1133. The G1 motif stretch occupies residues arginine 781 to threonine 794. Residue glycine 786–threonine 794 participates in GTP binding. Residue serine 793 coordinates Mg(2+). Residues phenylalanine 807 to alanine 828 are disordered. A G2 motif region spans residues aspartate 935–threonine 943. GTP-binding positions include leucine 936–threonine 943, aspartate 962–glutamine 966, and asparagine 1031–aspartate 1034. At arginine 940 the chain carries ADP-ribosylarginine; by cholera toxin. Residue threonine 943 coordinates Mg(2+). The tract at residues phenylalanine 958–arginine 967 is G3 motif. The G4 motif stretch occupies residues isoleucine 1027–aspartate 1034. At serine 1091 the chain carries Phosphoserine. The G5 motif stretch occupies residues threonine 1103–threonine 1108. Alanine 1105 serves as a coordination point for GTP.

The protein belongs to the G-alpha family. G(s) subfamily. As to quaternary structure, g proteins are composed of 3 units; alpha, beta and gamma. The alpha chain contains the guanine nucleotide binding site. Interacts through its N-terminal region with ALEX which is produced from the same locus in a different open reading frame. This interaction may inhibit its adenylyl cyclase-stimulating activity. Interacts with MAGED2.

It is found in the cell membrane. It localises to the apical cell membrane. The enzyme catalyses GTP + H2O = GDP + phosphate + H(+). Guanine nucleotide-binding proteins (G proteins) function as transducers in numerous signaling pathways controlled by G protein-coupled receptors (GPCRs). The alpha chain contains the guanine nucleotide binding site and alternates between an active, GTP-bound state and an inactive, GDP-bound state. Signaling by an activated GPCR promotes GDP release and GTP binding. The alpha subunit has a low GTPase activity that converts bound GTP to GDP, thereby terminating the signal. Both GDP release and GTP hydrolysis are modulated by numerous regulatory proteins. Signaling involves the activation of adenylyl cyclases, resulting in increased levels of the signaling molecule cAMP. GNAS functions downstream of several GPCRs, including beta-adrenergic receptors. XLas isoforms interact with the same set of receptors as Gnas isoforms. The protein is Guanine nucleotide-binding protein G(s) subunit alpha isoforms XLas of Mus musculus (Mouse).